A 63-amino-acid chain; its full sequence is Large ribosomal subunit protein bL35 (63 aa).

The span at 1–15 shows a compositional bias: basic residues; sequence MPKIKTHRGAAKRFK. The segment at 1 to 26 is disordered; the sequence is MPKIKTHRGAAKRFKQTAGGKWKGSH.

It belongs to the bacterial ribosomal protein bL35 family.

This chain is Large ribosomal subunit protein bL35, found in Pelotomaculum thermopropionicum (strain DSM 13744 / JCM 10971 / SI).